Reading from the N-terminus, the 77-residue chain is Small ribosomal subunit protein uS4 (77 aa).

The segment at 45-77 (PFGGGRPGRVKRKNQKAAAKKASGGDGDEEDEE) is disordered. The span at 52–63 (GRVKRKNQKAAA) shows a compositional bias: basic residues.

The protein belongs to the universal ribosomal protein uS4 family.

The protein is Small ribosomal subunit protein uS4 (RPS9) of Nicotiana tabacum (Common tobacco).